Here is a 565-residue protein sequence, read N- to C-terminus: 4-coumarate--CoA ligase-like 2 (565 aa).

Residues Ser-221, Ser-222, Gly-223, Thr-224, Thr-225, and Lys-229 each coordinate ATP. Phe-265 serves as a coordination point for (E)-4-coumaroyl-AMP. A CoA-binding site is contributed by Lys-286. The interval 288-359 is SBD1; it reads DMAKLLSAVE…ENYPKVKILQ (72 aa). (E)-4-coumaroyl-AMP is bound by residues Gly-337, Gln-359, Gly-360, and Thr-364. ATP contacts are provided by Gln-359, Gly-360, Thr-364, Asp-445, and Arg-460. The interval 360-424 is SBD2; it reads GYGLTESTAI…IRSPTVMKGY (65 aa). Lys-462 and Lys-466 together coordinate (E)-4-coumaroyl-AMP. CoA is bound at residue Gly-469. ATP is bound at residue Lys-551. The Microbody targeting signal motif lies at 563-565; the sequence is SKL.

Belongs to the ATP-dependent AMP-binding enzyme family. Mg(2+) is required as a cofactor.

It localises to the peroxisome. The catalysed reaction is (E)-4-coumarate + ATP + CoA = (E)-4-coumaroyl-CoA + AMP + diphosphate. It catalyses the reaction (E)-4-coumarate + ATP + H(+) = (E)-4-coumaroyl-AMP + diphosphate. It carries out the reaction (E)-4-coumaroyl-AMP + CoA = (E)-4-coumaroyl-CoA + AMP + H(+). Its function is as follows. Carboxylate--CoA ligase that may use 4-coumarate as substrate. Follows a two-step reaction mechanism, wherein the carboxylate substrate first undergoes adenylation by ATP, followed by a thioesterification in the presence of CoA to yield the final CoA thioester. The chain is 4-coumarate--CoA ligase-like 2 from Arabidopsis thaliana (Mouse-ear cress).